The following is a 559-amino-acid chain: Berberine bridge enzyme-like A (559 aa).

A signal peptide spans 1–21 (MFPLIILISFSLASLSETATG). 2 N-linked (GlcNAc...) asparagine glycosylation sites follow: asparagine 25 and asparagine 37. Residues cysteine 29 and cysteine 86 are joined by a disulfide bond. The FAD-binding PCMH-type domain occupies 64–240 (FMPKPTFIIL…YAWKIRLLKV (177 aa)). At histidine 101 the chain carries Pros-8alpha-FAD histidine. Residues asparagine 321, asparagine 355, and asparagine 494 are each glycosylated (N-linked (GlcNAc...) asparagine).

This sequence belongs to the oxygen-dependent FAD-linked oxidoreductase family. FAD serves as cofactor. As to expression, mostly expressed in roots.

The protein localises to the vacuole. The protein operates within alkaloid biosynthesis; nicotine biosynthesis. Its function is as follows. Involved in the biosynthesis of pyridine alkaloid natural products, leading mainly to the production of anabasine, anatabine, nicotine and nornicotine, effective deterrents against herbivores with antiparasitic and pesticide properties (neurotoxins); nornicotine serves as the precursor in the synthesis of the carcinogen compound N'-nitrosonornicotine (NNN). Catalyzes a late oxidation step subsequent to the pyridine ring condensation reaction in the biosynthesis of alkaloids. This Nicotiana tabacum (Common tobacco) protein is Berberine bridge enzyme-like A.